We begin with the raw amino-acid sequence, 302 residues long: Tyrosine recombinase XerC (302 aa).

The region spanning 6 to 90 (DLEVTCLQDY…AIKQWGEFLL (85 aa)) is the Core-binding (CB) domain. Residues 111-290 (PLPKNMDVDS…DFQHLAKVYD (180 aa)) enclose the Tyr recombinase domain. Catalysis depends on residues Arg150, Lys174, His242, Arg245, and His268. Residue Tyr277 is the O-(3'-phospho-DNA)-tyrosine intermediate of the active site.

The protein belongs to the 'phage' integrase family. XerC subfamily. In terms of assembly, forms a cyclic heterotetrameric complex composed of two molecules of XerC and two molecules of XerD.

The protein resides in the cytoplasm. Functionally, site-specific tyrosine recombinase, which acts by catalyzing the cutting and rejoining of the recombining DNA molecules. The XerC-XerD complex is essential to convert dimers of the bacterial chromosome into monomers to permit their segregation at cell division. It also contributes to the segregational stability of plasmids. This chain is Tyrosine recombinase XerC, found in Shewanella putrefaciens (strain CN-32 / ATCC BAA-453).